The following is a 126-amino-acid chain: MRHQKSGRKFNRTDAHRGAMFSNMIASLFKYQLIKTTLPKAKELRRFAEPLITLAKVDSVANRRLAFARLRNKEAVGILFSNLGPRYITRPGGYIRLLKCGFRHGDNAPMAYVEMLERPIIAEEVT.

Belongs to the bacterial ribosomal protein bL17 family. In terms of assembly, part of the 50S ribosomal subunit. Contacts protein L32.

This Xylella fastidiosa (strain Temecula1 / ATCC 700964) protein is Large ribosomal subunit protein bL17.